An 834-amino-acid polypeptide reads, in one-letter code: Protein argonaute (834 aa).

One can recognise a PAZ domain in the interval 210-326 (SLLQILMEYT…LPIEFCFVVK (117 aa)). The Piwi domain occupies 500 to 799 (YLFFILDKNS…VSNLARYQDV (300 aa)).

This sequence belongs to the argonaute family. Ago subfamily. As to quaternary structure, ago1, chp1 and tas3 interact to form the core of the RNA-induced transcriptional silencing (RITS) complex. The RITS complex interacts with the RDRC complex via interaction between ago1 and hrr1. Clr4 has a role in mediating this interaction. Component of the argonaute siRNA chaperone (ARC) complex composed of ago1, arb1 and arb2. Interacts with arb1.

It localises to the cytoplasm. Its subcellular location is the nucleus. The protein resides in the chromosome. It is found in the centromere. The protein localises to the telomere. Its function is as follows. Required for G1 arrest and mating in response to nitrogen starvation. Ago1 regulation of cytokinesis and cell cycle checkpoints occurs downstream of dcr1. Required, indirectly, for regulated hyperphosphorylation of cdc2. Has a role in the RNA interference (RNAi) pathway which is important for heterochromatin formation, accurate chromosome segregation, centromere cohesion and telomere function during mitosis and meiosis. Required for silencing at the centromeres and for initiation of transcriptionally silent heterochromatin at the mating type locus. Promotes histone H3K9 methylation necessary for centromere function. Required for recruitment of swi6 and cohesin to an ectopic dg repeat. A member of the RNA-induced transcriptional silencing (RITS) complex which is involved in the biosynthesis of dsRNA from primer siRNAs provided by the RNA-directed RNA polymerase (RDRC) complex. Has ribonuclease H-like cleavage (slicing) activity towards target messages complementary to siRNA and can direct site-specific cleavage of RNA substrates via siRNA. Slicing activity is required for both post-transcriptional and transcriptional gene silencing as well as for histone H3 'Lys-10' methylation spreading, conversion of double-stranded siRNA to single-stranded siRNA and siRNA-dependent association of ago1 with chromatin. A member of the argonaute siRNA chaperone (ARC) complex which is required for histone H3K9 methylation, heterochromatin assembly and siRNA generation. The ARC complex contains mostly double-stranded siRNA. This is Protein argonaute (ago1) from Schizosaccharomyces pombe (strain 972 / ATCC 24843) (Fission yeast).